A 216-amino-acid chain; its full sequence is Probable GTP-binding protein EngB (216 aa).

The 178-residue stretch at 37 to 214 (DGLEVAFAGR…RAAMIRLLDE (178 aa)) folds into the EngB-type G domain. GTP contacts are provided by residues 45–52 (GRSNVGKS), 72–76 (GRTQE), 92–95 (DMPG), 159–162 (TKAD), and 193–195 (TSS). Mg(2+) contacts are provided by Ser-52 and Thr-74.

It belongs to the TRAFAC class TrmE-Era-EngA-EngB-Septin-like GTPase superfamily. EngB GTPase family. The cofactor is Mg(2+).

Necessary for normal cell division and for the maintenance of normal septation. This chain is Probable GTP-binding protein EngB, found in Rhodopseudomonas palustris (strain HaA2).